The primary structure comprises 47 residues: Large ribosomal subunit protein bL33 (47 aa).

This sequence belongs to the bacterial ribosomal protein bL33 family.

This is Large ribosomal subunit protein bL33 from Staphylococcus capitis.